The chain runs to 442 residues: Glutamate--tRNA ligase 1 (442 aa).

The short motif at 9-19 (PSPTGKLHVGN) is the 'HIGH' region element. The 'KMSKS' region signature appears at 240–244 (KLSKR). K243 contributes to the ATP binding site.

The protein belongs to the class-I aminoacyl-tRNA synthetase family. Glutamate--tRNA ligase type 1 subfamily. In terms of assembly, monomer.

The protein resides in the cytoplasm. The enzyme catalyses tRNA(Glu) + L-glutamate + ATP = L-glutamyl-tRNA(Glu) + AMP + diphosphate. Functionally, catalyzes the attachment of glutamate to tRNA(Glu) in a two-step reaction: glutamate is first activated by ATP to form Glu-AMP and then transferred to the acceptor end of tRNA(Glu). This Novosphingobium aromaticivorans (strain ATCC 700278 / DSM 12444 / CCUG 56034 / CIP 105152 / NBRC 16084 / F199) protein is Glutamate--tRNA ligase 1.